The sequence spans 335 residues: Protein PXR1 (335 aa).

One can recognise a G-patch domain in the interval 25 to 71; the sequence is KSRFGHKYLEKLGWEPGKGLGHASHAMSTHIKVTIKDDTMGLGAKLK. A disordered region spans residues 155–310; it reads DDAEDAKVSG…PPTISTRLSV (156 aa). A compositionally biased stretch (basic residues) spans 163-175; it reads SGKHRDRKSRAKR. Residues 183 to 209 are compositionally biased toward basic and acidic residues; the sequence is LKEKCRDIDRTRKSKRKEKEQEKEKNR. The span at 226–257 shows a compositional bias: basic residues; that stretch reads KKDKKDKKEKKEKKEKKEKKEKKHKEKSNKRL.

It belongs to the PINX1 family.

Its subcellular location is the nucleus. The protein localises to the nucleolus. Functionally, involved in rRNA-processing at A0, A1 and A2 sites and negatively regulates telomerase. The polypeptide is Protein PXR1 (PXR1) (Eremothecium gossypii (strain ATCC 10895 / CBS 109.51 / FGSC 9923 / NRRL Y-1056) (Yeast)).